The following is a 389-amino-acid chain: Endonuclease 8-like 1 (389 aa).

Residue proline 2 is the Schiff-base intermediate with DNA of the active site. Glutamate 3 functions as the Proton donor in the catalytic mechanism. Lysine 54 serves as the catalytic Proton donor; for beta-elimination activity. Asparagine 176 lines the DNA pocket. The segment at 278–389 is disordered; the sequence is TIWFQGDPGP…PREAGESSAS (112 aa). Basic residues predominate over residues 322–333; sequence SRMRRARKHPPK. Polar residues predominate over residues 336–351; it reads AQQSEGAGLQQNQETP. A compositionally biased stretch (basic residues) spans 357-373; that stretch reads GKRRGQRASTGHRRRPK. The span at 374–389 shows a compositional bias: basic and acidic residues; the sequence is TIPDTRPREAGESSAS.

Belongs to the FPG family. Detected in heart, spleen and lung.

It localises to the cytoplasm. It is found in the cytoskeleton. Its subcellular location is the microtubule organizing center. The protein resides in the centrosome. The protein localises to the nucleus. It localises to the chromosome. It carries out the reaction 2'-deoxyribonucleotide-(2'-deoxyribose 5'-phosphate)-2'-deoxyribonucleotide-DNA = a 3'-end 2'-deoxyribonucleotide-(2,3-dehydro-2,3-deoxyribose 5'-phosphate)-DNA + a 5'-end 5'-phospho-2'-deoxyribonucleoside-DNA + H(+). Functionally, involved in base excision repair of DNA damaged by oxidation or by mutagenic agents. Acts as a DNA glycosylase that recognizes and removes damaged bases. Has a preference for oxidized pyrimidines, such as thymine glycol, formamidopyrimidine (Fapy) and 5-hydroxyuracil. Has marginal activity towards 8-oxoguanine. Has AP (apurinic/apyrimidinic) lyase activity and introduces nicks in the DNA strand. Cleaves the DNA backbone by beta-delta elimination to generate a single-strand break at the site of the removed base with both 3'- and 5'-phosphates. Has DNA glycosylase/lyase activity towards mismatched uracil and thymine, in particular in U:C and T:C mismatches. Specifically binds 5-hydroxymethylcytosine (5hmC), suggesting that it acts as a specific reader of 5hmC. The sequence is that of Endonuclease 8-like 1 (Neil1) from Mus musculus (Mouse).